We begin with the raw amino-acid sequence, 385 residues long: Sulfoquinovose monooxygenase (385 aa).

A disordered region spans residues 366–385 (AYGRVPSETPATPLGNGERH).

It belongs to the SsuD family. Homodimer.

It catalyses the reaction 6-sulfo-D-quinovose + FMNH2 + O2 = 6-dehydro-D-glucose + FMN + sulfite + H2O + 2 H(+). Functionally, part of the sulfoquinovose monooxygenase (sulfo-SMO) pathway, a D-sulfoquinovose degradation pathway that enables the complete utilization of all carbons within sulfoquinovose (SQ) with concomitant production of inorganic sulfite. Catalyzes the oxidative desulfurization of sulfoquinovose to sulfite and 6-dehydro-D-glucose. Is highly specific for sulfoquinovose and cannot use sulfoquinovosyl glycerol. FMNH(2) is provided by the FMN reductase SmoA. In Agrobacterium fabrum (strain C58 / ATCC 33970) (Agrobacterium tumefaciens (strain C58)), this protein is Sulfoquinovose monooxygenase.